Consider the following 430-residue polypeptide: 3-oxo-tetronate kinase (430 aa).

Residues Ser-268, 366–369 (GGET), and Gly-410 contribute to the ATP site.

It belongs to the four-carbon acid sugar kinase family.

It catalyses the reaction 3-dehydro-L-erythronate + ATP = 3-dehydro-4-O-phospho-L-erythronate + ADP + H(+). It carries out the reaction 3-dehydro-D-erythronate + ATP = 3-dehydro-4-O-phospho-D-erythronate + ADP + H(+). Functionally, catalyzes the ATP-dependent phosphorylation of 3-oxo-tetronate to 3-oxo-tetronate 4-phosphate. This is 3-oxo-tetronate kinase from Pseudomonas fluorescens (strain ATCC BAA-477 / NRRL B-23932 / Pf-5).